The following is a 555-amino-acid chain: Glucose-6-phosphate isomerase (555 aa).

Glutamate 356 acts as the Proton donor in catalysis. Residues histidine 387 and lysine 515 contribute to the active site.

This sequence belongs to the GPI family.

The protein localises to the cytoplasm. It carries out the reaction alpha-D-glucose 6-phosphate = beta-D-fructose 6-phosphate. Its pathway is carbohydrate biosynthesis; gluconeogenesis. It participates in carbohydrate degradation; glycolysis; D-glyceraldehyde 3-phosphate and glycerone phosphate from D-glucose: step 2/4. In terms of biological role, catalyzes the reversible isomerization of glucose-6-phosphate to fructose-6-phosphate. This Desulforapulum autotrophicum (strain ATCC 43914 / DSM 3382 / VKM B-1955 / HRM2) (Desulfobacterium autotrophicum) protein is Glucose-6-phosphate isomerase.